The chain runs to 248 residues: Pyridoxine 5'-phosphate synthase (248 aa).

N11 is a binding site for 3-amino-2-oxopropyl phosphate. 13 to 14 (DH) contacts 1-deoxy-D-xylulose 5-phosphate. R22 contributes to the 3-amino-2-oxopropyl phosphate binding site. The active-site Proton acceptor is the H47. 2 residues coordinate 1-deoxy-D-xylulose 5-phosphate: R49 and H54. The active-site Proton acceptor is the E74. T104 provides a ligand contact to 1-deoxy-D-xylulose 5-phosphate. H198 functions as the Proton donor in the catalytic mechanism. Residues G199 and 220–221 (GH) contribute to the 3-amino-2-oxopropyl phosphate site.

It belongs to the PNP synthase family. As to quaternary structure, homooctamer; tetramer of dimers.

Its subcellular location is the cytoplasm. It catalyses the reaction 3-amino-2-oxopropyl phosphate + 1-deoxy-D-xylulose 5-phosphate = pyridoxine 5'-phosphate + phosphate + 2 H2O + H(+). The protein operates within cofactor biosynthesis; pyridoxine 5'-phosphate biosynthesis; pyridoxine 5'-phosphate from D-erythrose 4-phosphate: step 5/5. Its function is as follows. Catalyzes the complicated ring closure reaction between the two acyclic compounds 1-deoxy-D-xylulose-5-phosphate (DXP) and 3-amino-2-oxopropyl phosphate (1-amino-acetone-3-phosphate or AAP) to form pyridoxine 5'-phosphate (PNP) and inorganic phosphate. In Ruegeria pomeroyi (strain ATCC 700808 / DSM 15171 / DSS-3) (Silicibacter pomeroyi), this protein is Pyridoxine 5'-phosphate synthase.